The sequence spans 159 residues: Transcriptional repressor NrdR (159 aa).

Residues 1–26 form a disordered region; the sequence is MRCPFCAHDNSQVKDSRPSEDNTSIR. The segment at 3–34 is a zinc-finger region; it reads CPFCAHDNSQVKDSRPSEDNTSIRRRRQCEGC. Over residues 11–24 the composition is skewed to basic and acidic residues; that stretch reads SQVKDSRPSEDNTS. The region spanning 49–139 is the ATP-cone domain; the sequence is VVVVKSGERR…VYRDFTEARD (91 aa).

This sequence belongs to the NrdR family. Requires Zn(2+) as cofactor.

In terms of biological role, negatively regulates transcription of bacterial ribonucleotide reductase nrd genes and operons by binding to NrdR-boxes. This is Transcriptional repressor NrdR from Novosphingobium aromaticivorans (strain ATCC 700278 / DSM 12444 / CCUG 56034 / CIP 105152 / NBRC 16084 / F199).